A 100-amino-acid chain; its full sequence is Osteocalcin (100 aa).

The N-terminal stretch at 1 to 23 is a signal peptide; that stretch reads MRALTLLALLALAALCIAGQAGA. Positions 24–51 are excised as a propeptide; sequence KPSGAESSKGAAFVSKQEGSEVVKRPRR. The Gla domain maps to 52-98; sequence YLYQWLGAPVPYPDPLEPRREVCELNPDCDELADHIGFQEAYRRFYG. Residues E68, E72, E75, and D81 each coordinate Ca(2+). At E68 the chain carries 4-carboxyglutamate; partial. 2 positions are modified to 4-carboxyglutamate: E72 and E75. C74 and C80 are oxidised to a cystine.

The protein belongs to the osteocalcin/matrix Gla protein family. In terms of processing, gamma-carboxyglutamate residues are formed by vitamin K dependent carboxylation by GGCX. These residues are essential for the binding of calcium. Decarboxylation promotes the hormone activity.

The protein localises to the secreted. In terms of biological role, bone protein that constitutes 1-2% of the total bone protein, and which acts as a negative regulator of bone formation. Functions to limit bone formation without impairing bone resorption or mineralization. It binds strongly to apatite and calcium. Its function is as follows. The uncarboxylated form acts as a hormone secreted by osteoblasts, which regulates different cellular processes, such as energy metabolism, male fertility and brain development. Regulates of energy metabolism by acting as a hormone favoring pancreatic beta-cell proliferation, insulin secretion and sensitivity and energy expenditure. Uncarboxylated osteocalcin hormone also promotes testosterone production in the testes: acts as a ligand for G protein-coupled receptor GPRC6A at the surface of Leydig cells, initiating a signaling response that promotes the expression of enzymes required for testosterone synthesis in a CREB-dependent manner. Also acts as a regulator of brain development: osteocalcin hormone crosses the blood-brain barrier and acts as a ligand for GPR158 on neurons, initiating a signaling response that prevents neuronal apoptosis in the hippocampus, favors the synthesis of all monoamine neurotransmitters and inhibits that of gamma-aminobutyric acid (GABA). Osteocalcin also crosses the placenta during pregnancy and maternal osteocalcin is required for fetal brain development. The protein is Osteocalcin (BGLAP) of Homo sapiens (Human).